The following is a 368-amino-acid chain: Phosphoserine aminotransferase (368 aa).

Arg42 provides a ligand contact to L-glutamate. Residues 76-77 (AS), Trp102, Thr152, Asp179, and Gln202 each bind pyridoxal 5'-phosphate. The residue at position 203 (Lys203) is an N6-(pyridoxal phosphate)lysine. 245-246 (NT) lines the pyridoxal 5'-phosphate pocket.

The protein belongs to the class-V pyridoxal-phosphate-dependent aminotransferase family. SerC subfamily. As to quaternary structure, homodimer. The cofactor is pyridoxal 5'-phosphate.

It is found in the cytoplasm. The catalysed reaction is O-phospho-L-serine + 2-oxoglutarate = 3-phosphooxypyruvate + L-glutamate. The enzyme catalyses 4-(phosphooxy)-L-threonine + 2-oxoglutarate = (R)-3-hydroxy-2-oxo-4-phosphooxybutanoate + L-glutamate. It functions in the pathway amino-acid biosynthesis; L-serine biosynthesis; L-serine from 3-phospho-D-glycerate: step 2/3. It participates in cofactor biosynthesis; pyridoxine 5'-phosphate biosynthesis; pyridoxine 5'-phosphate from D-erythrose 4-phosphate: step 3/5. Its function is as follows. Catalyzes the reversible conversion of 3-phosphohydroxypyruvate to phosphoserine and of 3-hydroxy-2-oxo-4-phosphonooxybutanoate to phosphohydroxythreonine. This Nitrosomonas europaea (strain ATCC 19718 / CIP 103999 / KCTC 2705 / NBRC 14298) protein is Phosphoserine aminotransferase.